The chain runs to 269 residues: Octanoyltransferase LipM (269 aa).

Positions 31-239 (NHGAPVLRFY…GFSEGFEVNF (209 aa)) constitute a BPL/LPL catalytic domain. Residue C141 is the Acyl-thioester intermediate of the active site.

This sequence belongs to the octanoyltransferase LipM family. Monomer.

The catalysed reaction is octanoyl-[ACP] + L-lysyl-[protein] = N(6)-octanoyl-L-lysyl-[protein] + holo-[ACP] + H(+). Its pathway is protein modification; protein lipoylation via endogenous pathway; protein N(6)-(lipoyl)lysine from octanoyl-[acyl-carrier-protein]. In terms of biological role, catalyzes the transfer of endogenously produced octanoic acid from octanoyl-acyl-carrier-protein onto the lipoyl domain of GcvH, an intermediate carrier during protein lipoylation. In Carboxydothermus hydrogenoformans (strain ATCC BAA-161 / DSM 6008 / Z-2901), this protein is Octanoyltransferase LipM.